The chain runs to 335 residues: Glyoxylate reductase (335 aa).

Residues 159-162 (MGRI), 181-183 (SRS), and 240-242 (TGR) contribute to the NADP(+) site. Active-site residues include Arg242 and Glu271. The Proton donor role is filled by His290. 290–292 (HAA) is a binding site for NADP(+).

It belongs to the D-isomer specific 2-hydroxyacid dehydrogenase family. GyaR subfamily. Homodimer.

The protein resides in the cytoplasm. It carries out the reaction glycolate + NAD(+) = glyoxylate + NADH + H(+). The polypeptide is Glyoxylate reductase (Aeropyrum pernix (strain ATCC 700893 / DSM 11879 / JCM 9820 / NBRC 100138 / K1)).